A 563-amino-acid chain; its full sequence is Arginine--tRNA ligase (563 aa).

The 'HIGH' region signature appears at 121-131; it reads PNIAKPMSMGH.

Belongs to the class-I aminoacyl-tRNA synthetase family. As to quaternary structure, monomer.

The protein localises to the cytoplasm. The catalysed reaction is tRNA(Arg) + L-arginine + ATP = L-arginyl-tRNA(Arg) + AMP + diphosphate. This Leuconostoc mesenteroides subsp. mesenteroides (strain ATCC 8293 / DSM 20343 / BCRC 11652 / CCM 1803 / JCM 6124 / NCDO 523 / NBRC 100496 / NCIMB 8023 / NCTC 12954 / NRRL B-1118 / 37Y) protein is Arginine--tRNA ligase.